Here is an 873-residue protein sequence, read N- to C-terminus: Putative receptor-like protein kinase At5g39000 (873 aa).

A signal peptide spans 1-21 (MIRHALLIFSILVSTPIVGEG). Over 22–445 (ATSTYEPTDV…KNKSHILPIT (424 aa)) the chain is Extracellular. 9 N-linked (GlcNAc...) asparagine glycosylation sites follow: Asn-49, Asn-64, Asn-138, Asn-168, Asn-216, Asn-266, Asn-300, Asn-340, and Asn-437. Residues 446–466 (LAVVGSLVVLAMFVVGVLVIM) form a helical membrane-spanning segment. Over 467-873 (KKKKKSKPST…FSEINEPKAR (407 aa)) the chain is Cytoplasmic. The segment at 472–494 (SKPSTNSSWCPLPHGTDSTNTKP) is disordered. Positions 518 to 803 (FEDKLIIGVG…EFALQLHETA (286 aa)) constitute a Protein kinase domain. Residues 524–532 (IGVGGFGSV) and Lys-547 contribute to the ATP site. Asp-646 serves as the catalytic Proton acceptor. Residues 813–843 (LDLMPSGEVGTTTDGEDDLFSRTTGHVGKST) are disordered. Residues 833-843 (SRTTGHVGKST) show a composition bias toward polar residues.

Belongs to the protein kinase superfamily. Ser/Thr protein kinase family.

The protein resides in the membrane. The polypeptide is Putative receptor-like protein kinase At5g39000 (Arabidopsis thaliana (Mouse-ear cress)).